A 422-amino-acid polypeptide reads, in one-letter code: uncharacterized protein (422 aa).

The protein belongs to the N(4)/N(6)-methyltransferase family.

It catalyses the reaction a 2'-deoxyadenosine in DNA + S-adenosyl-L-methionine = an N(6)-methyl-2'-deoxyadenosine in DNA + S-adenosyl-L-homocysteine + H(+). This is an uncharacterized protein from Mycoplasma pneumoniae (strain ATCC 29342 / M129 / Subtype 1) (Mycoplasmoides pneumoniae).